Here is a 423-residue protein sequence, read N- to C-terminus: AP-1 complex subunit mu-1 (423 aa).

An N-acetylserine modification is found at Ser2. A phosphothreonine mark is found at Thr152, Thr154, and Thr223. Residues Lys168–Arg421 form the MHD domain.

The protein belongs to the adaptor complexes medium subunit family. Adaptor protein complex 1 (AP-1) is a heterotetramer composed of two large adaptins (gamma-type subunit AP1G1 and beta-type subunit AP1B1), a medium adaptin (mu-type subunit AP1M1 or AP1M2) and a small adaptin (sigma-type subunit AP1S1 or AP1S2 or AP1S3). Interacts with MARCHF11. Phosphorylation of membrane-bound AP1M1/AP1M2 increases its affinity for sorting signals.

The protein resides in the cytoplasmic vesicle. It is found in the clathrin-coated vesicle membrane. Its subcellular location is the golgi apparatus. Functionally, subunit of clathrin-associated adaptor protein complex 1 that plays a role in protein sorting in the trans-Golgi network (TGN) and endosomes. The AP complexes mediate the recruitment of clathrin to membranes and the recognition of sorting signals within the cytosolic tails of transmembrane cargo molecules. This Rattus norvegicus (Rat) protein is AP-1 complex subunit mu-1.